The primary structure comprises 438 residues: Histidinol dehydrogenase (438 aa).

Residues tyrosine 135, glutamine 193, and asparagine 216 each contribute to the NAD(+) site. Substrate-binding residues include serine 243, glutamine 265, and histidine 268. Glutamine 265 and histidine 268 together coordinate Zn(2+). Active-site proton acceptor residues include glutamate 332 and histidine 333. Residues histidine 333, aspartate 366, glutamate 420, and histidine 425 each coordinate substrate. Aspartate 366 is a binding site for Zn(2+). Residue histidine 425 participates in Zn(2+) binding.

It belongs to the histidinol dehydrogenase family. The cofactor is Zn(2+).

It catalyses the reaction L-histidinol + 2 NAD(+) + H2O = L-histidine + 2 NADH + 3 H(+). The protein operates within amino-acid biosynthesis; L-histidine biosynthesis; L-histidine from 5-phospho-alpha-D-ribose 1-diphosphate: step 9/9. Its function is as follows. Catalyzes the sequential NAD-dependent oxidations of L-histidinol to L-histidinaldehyde and then to L-histidine. This is Histidinol dehydrogenase from Shewanella oneidensis (strain ATCC 700550 / JCM 31522 / CIP 106686 / LMG 19005 / NCIMB 14063 / MR-1).